We begin with the raw amino-acid sequence, 236 residues long: Sugar fermentation stimulation protein homolog (236 aa).

Belongs to the SfsA family.

This Paramagnetospirillum magneticum (strain ATCC 700264 / AMB-1) (Magnetospirillum magneticum) protein is Sugar fermentation stimulation protein homolog.